The primary structure comprises 362 residues: Molybdenum import ATP-binding protein ModC (362 aa).

Positions 1–236 (MTASGLYLNL…TQSPTAQGED (236 aa)) constitute an ABC transporter domain. 36-43 (GPSGSGKT) is a binding site for ATP. Positions 297 to 362 (DSTILNKLAA…AQVKSVAIVG (66 aa)) constitute a Mop domain.

The protein belongs to the ABC transporter superfamily. Molybdate importer (TC 3.A.1.8) family. As to quaternary structure, the complex is composed of two ATP-binding proteins (ModC), two transmembrane proteins (ModB) and a solute-binding protein (ModA).

It is found in the cell inner membrane. It catalyses the reaction molybdate(out) + ATP + H2O = molybdate(in) + ADP + phosphate + H(+). Part of the ABC transporter complex ModABC involved in molybdenum import. Responsible for energy coupling to the transport system. The protein is Molybdenum import ATP-binding protein ModC of Saccharophagus degradans (strain 2-40 / ATCC 43961 / DSM 17024).